Consider the following 162-residue polypeptide: Beta-lactoglobulin-1 (162 aa).

Cystine bridges form between Cys66-Cys160 and Cys106-Cys119.

This sequence belongs to the calycin superfamily. Lipocalin family. As to quaternary structure, monomer.

The protein localises to the secreted. Its function is as follows. Lactoglobulin is the primary component of whey, it binds retinol and is probably involved in the transport of that molecule. The polypeptide is Beta-lactoglobulin-1 (LGB1) (Felis catus (Cat)).